Reading from the N-terminus, the 255-residue chain is MAVQTFPNEIVFFDLETNVPNKAGQHFHILEFGAIIVCPKKLEELESFTTLIQPKDLSVVSIRSSRSDGITRAKVTNAPSFEDVAEKIHGLLNGRIWAGHNIRRFDCVRIKEAFAEIGKAAPEPSGIIDSLGLLSDKFGKRAGNMKMASLAAYFGLGVQKHRSLDDVRMNLEVLKHCATVLFLESTLPNHLEGKWHTSSKIMTRSRRNYQIAQRAMPYSKGSLEKMTQNVKNLLSKAQGNQTLQSLINHSHSLLR.

Positions 11–174 (VFFDLETNVP…DDVRMNLEVL (164 aa)) constitute an Exonuclease domain. 2 residues coordinate Mg(2+): Asp14 and Glu16. The active-site Proton donor/acceptor is His161. Position 166 (Asp166) interacts with Mg(2+).

Mg(2+) serves as cofactor. In terms of tissue distribution, expressed in the sieve elements and phloem pole pericycle cells.

The protein localises to the nucleus. Functionally, probable exonuclease required for enuclation of sieve elements. In Arabidopsis thaliana (Mouse-ear cress), this protein is Protein NEN4.